Reading from the N-terminus, the 273-residue chain is Large ribosomal subunit protein uL2cy (273 aa).

Disordered regions lie at residues 1-27 (MAIH…SNPR) and 224-273 (NPVD…RRRK).

This sequence belongs to the universal ribosomal protein uL2 family. Part of the 50S ribosomal subunit.

Its subcellular location is the plastid. The protein resides in the chloroplast. In Liriodendron tulipifera (Tuliptree), this protein is Large ribosomal subunit protein uL2cy (rpl2-B).